Reading from the N-terminus, the 914-residue chain is Alanine--tRNA ligase (914 aa).

The Zn(2+) site is built by H613, H617, C717, and H721.

It belongs to the class-II aminoacyl-tRNA synthetase family. Zn(2+) is required as a cofactor.

The protein resides in the cytoplasm. The catalysed reaction is tRNA(Ala) + L-alanine + ATP = L-alanyl-tRNA(Ala) + AMP + diphosphate. Its function is as follows. Catalyzes the attachment of alanine to tRNA(Ala) in a two-step reaction: alanine is first activated by ATP to form Ala-AMP and then transferred to the acceptor end of tRNA(Ala). Also edits incorrectly charged Ser-tRNA(Ala) and Gly-tRNA(Ala) via its editing domain. This is Alanine--tRNA ligase from Pyrococcus furiosus (strain ATCC 43587 / DSM 3638 / JCM 8422 / Vc1).